Here is a 257-residue protein sequence, read N- to C-terminus: Thiazole synthase (257 aa).

The active-site Schiff-base intermediate with DXP is the K98. 1-deoxy-D-xylulose 5-phosphate-binding positions include G159, A185 to G186, and N207 to T208.

Belongs to the ThiG family. In terms of assembly, homotetramer. Forms heterodimers with either ThiH or ThiS.

It localises to the cytoplasm. It catalyses the reaction [ThiS sulfur-carrier protein]-C-terminal-Gly-aminoethanethioate + 2-iminoacetate + 1-deoxy-D-xylulose 5-phosphate = [ThiS sulfur-carrier protein]-C-terminal Gly-Gly + 2-[(2R,5Z)-2-carboxy-4-methylthiazol-5(2H)-ylidene]ethyl phosphate + 2 H2O + H(+). It functions in the pathway cofactor biosynthesis; thiamine diphosphate biosynthesis. Functionally, catalyzes the rearrangement of 1-deoxy-D-xylulose 5-phosphate (DXP) to produce the thiazole phosphate moiety of thiamine. Sulfur is provided by the thiocarboxylate moiety of the carrier protein ThiS. In vitro, sulfur can be provided by H(2)S. This chain is Thiazole synthase, found in Anaeromyxobacter dehalogenans (strain 2CP-1 / ATCC BAA-258).